Reading from the N-terminus, the 52-residue chain is MAVPKKRTSILKKRIRKNLWKKGGYWAALKAFSLAKSLATGNSKSFFCTTNK.

Belongs to the bacterial ribosomal protein bL32 family.

The protein localises to the plastid. It localises to the chloroplast. The polypeptide is Large ribosomal subunit protein bL32c (Citrus sinensis (Sweet orange)).